The primary structure comprises 137 residues: Acidic phospholipase A2 Vur-PL3 (137 aa).

The first 16 residues, 1–16, serve as a signal peptide directing secretion; that stretch reads MRTLWIVAVCLIGVEG. Disulfide bonds link C42/C131, C44/C60, C59/C111, C65/C137, C66/C104, C73/C97, and C91/C102. Ca(2+)-binding residues include Y43, G45, and G47. The active site involves H63. D64 is a Ca(2+) binding site. D105 is a catalytic residue.

The cofactor is Ca(2+). As to expression, expressed by the venom gland.

The protein localises to the secreted. The catalysed reaction is a 1,2-diacyl-sn-glycero-3-phosphocholine + H2O = a 1-acyl-sn-glycero-3-phosphocholine + a fatty acid + H(+). The sequence is that of Acidic phospholipase A2 Vur-PL3 from Vipera renardi (Steppe viper).